The following is a 216-amino-acid chain: Pyrophosphatase PpaX (216 aa).

D9 serves as the catalytic Nucleophile.

Belongs to the HAD-like hydrolase superfamily. PpaX family. The cofactor is Mg(2+).

The enzyme catalyses diphosphate + H2O = 2 phosphate + H(+). Hydrolyzes pyrophosphate formed during P-Ser-HPr dephosphorylation by HPrK/P. Might play a role in controlling the intracellular pyrophosphate pool. This Bacillus cereus (strain Q1) protein is Pyrophosphatase PpaX.